The chain runs to 1048 residues: MDPVVRKPDPGGVQHRVTKALRAIVGHACRHPIHTLLVTALTAATTHLHVLEGTYQATHRGLAPWAKETPLNVQSFLWGSRTVSLGEASAWKWQIDDRPKVPEDGQSDFHWALVTLDLPGASVDASIPFLSNTLSGFLGAEQTTPTPDSSPSPDHSALTFRVPYSQLDGFLQAVEIIPSEKEDDSWRLRSPREEGSPRSLGHWLGSSWLSFLHRVHHAETVDLVIIGLSYLAMNMTVVSLFRVMRHLGSRFWLAASVLLSGAFAFVLGLGITTTCDVPVDMLLLFEGIPYLVLTVGFEKPIQLTRAVLCVSEELWGGGQRQVPNGASSDDSRQNQLIPNIIQLAVDREGWYIVRSYLLEIGALALGAVLRPKDSLGHFCFLAAWTLLIDAVLLFTFYATILCVKLEITRIRSPGGLGQVNAKHPSGIFGHKVKSTNITWWKLLTVGGFVLCHFLQLSPFFYRVMGEYMANGTLPPTAVSPFKEAANGLNEIYLTARVEGFETRVTVLPPLQYVLESAGFNISATKRSTFDGVLDGLESPLGRLCLMGALVVSLVLNNHLIHAARWHAWPQARESAVPDGSYLSVPCSATAPEVCTRPPEETEALLKSNQAESLTDDELVELCLRGKIAGYSLEKTLERIAAGSSRSVTRLEAFTRAVRIRRAAVSKTPSTQNLCSGLAESLLPYRDYNYELVHGACCENVVGYLPLPLGVAGPMVIDGQALFIPMATTEGVLVASASRGCKAINAGGGATTMLKGDGMTRGPCLRFPSAQRAAEAQRWVESPLGHEVLAAAFNATSRFARLQTLTVAQAGIYLYIRFRTTTGDAMGMNMISKGVEKALEAMAAEGGFPDMHTVTLSGNFCSDKKSAAINWIGGRGKSVIAEATIPAETVRQVLKTDVDALVELNTAKNLVGSAMAGSLGGFNAHASNLVQAVFLATGQDPAQNVESSSCITTMKNIDGNLHIAVSMPSMEVGTIGGGTILEAQGAMLDLLGVRGAHSTEPGANARRLARIVAAAVLAGELSTCAALAAGHLVNAHMQHNRSAGATVKK.

Over 1 to 32 (MDPVVRKPDPGGVQHRVTKALRAIVGHACRHP) the chain is Cytoplasmic. Residues 33–53 (IHTLLVTALTAATTHLHVLEG) form a helical membrane-spanning segment. The Lumenal portion of the chain corresponds to 54–220 (TYQATHRGLA…FLHRVHHAET (167 aa)). A helical membrane pass occupies residues 221–241 (VDLVIIGLSYLAMNMTVVSLF). Residues 222–403 (DLVIIGLSYL…FTFYATILCV (182 aa)) enclose the SSD domain. The Cytoplasmic portion of the chain corresponds to 242–250 (RVMRHLGSR). A helical membrane pass occupies residues 251–271 (FWLAASVLLSGAFAFVLGLGI). Topologically, residues 272–276 (TTTCD) are lumenal. A helical transmembrane segment spans residues 277 to 297 (VPVDMLLLFEGIPYLVLTVGF). Residues 298 to 348 (EKPIQLTRAVLCVSEELWGGGQRQVPNGASSDDSRQNQLIPNIIQLAVDRE) are Cytoplasmic-facing. Residues 349-369 (GWYIVRSYLLEIGALALGAVL) form a helical membrane-spanning segment. At 370–377 (RPKDSLGH) the chain is on the lumenal side. A helical transmembrane segment spans residues 378–398 (FCFLAAWTLLIDAVLLFTFYA). Residues 399–439 (TILCVKLEITRIRSPGGLGQVNAKHPSGIFGHKVKSTNITW) lie on the Cytoplasmic side of the membrane. Residues 440–460 (WKLLTVGGFVLCHFLQLSPFF) traverse the membrane as a helical segment. Residues 461–542 (YRVMGEYMAN…LDGLESPLGR (82 aa)) are Lumenal-facing. N470 and N520 each carry an N-linked (GlcNAc...) asparagine glycan. A helical membrane pass occupies residues 543–563 (LCLMGALVVSLVLNNHLIHAA). Residues 564-1048 (RWHAWPQARE…NRSAGATVKK (485 aa)) lie on the Cytoplasmic side of the membrane. Catalysis depends on E729, which acts as the Charge relay system. Position 735–741 (735–741 (SASRGCK)) interacts with CoA. NADP(+) contacts are provided by residues 796-798 (SRF) and 823-831 (DAMGMNMIS). Residue K863 is the Charge relay system of the active site. 892-894 (VLK) lines the CoA pocket. Catalysis depends on D939, which acts as the Charge relay system. 1034–1035 (AH) lines the CoA pocket. H1035 (proton donor) is an active-site residue. 1039 to 1040 (NR) is an NADP(+) binding site.

Belongs to the HMG-CoA reductase family.

It is found in the endoplasmic reticulum membrane. It carries out the reaction (R)-mevalonate + 2 NADP(+) + CoA = (3S)-3-hydroxy-3-methylglutaryl-CoA + 2 NADPH + 2 H(+). It participates in metabolic intermediate biosynthesis; (R)-mevalonate biosynthesis; (R)-mevalonate from acetyl-CoA: step 3/3. Its function is as follows. HMG-CoA reductase; part of the first module of ergosterol biosynthesis pathway that includes the early steps of the pathway, conserved across all eukaryotes, and which results in the formation of mevalonate from acetyl-coenzyme A (acetyl-CoA). In this module, the cytosolic acetyl-CoA acetyltransferase catalyzes the formation of acetoacetyl-CoA. The hydroxymethylglutaryl-CoA synthase then condenses acetyl-CoA with acetoacetyl-CoA to form HMG-CoA. The rate-limiting step of the early module is the reduction to mevalonate by the 3-hydroxy-3-methylglutaryl-coenzyme A (HMG-CoA) reductase. The protein is 3-hydroxy-3-methylglutaryl-coenzyme A reductase of Aspergillus terreus.